Reading from the N-terminus, the 526-residue chain is Adenylosuccinate synthetase (526 aa).

GTP contacts are provided by residues 102–108 (GDEGKGK) and 130–132 (GHT). The active-site Proton acceptor is Asp-103. Residues Asp-103 and Gly-130 each coordinate Mg(2+). IMP-binding positions include 103–106 (DEGK), 128–131 (NAGH), Thr-219, Arg-233, Asn-310, Thr-325, and Arg-392. His-131 serves as the catalytic Proton donor. 388–394 (TTTGRTR) serves as a coordination point for substrate. GTP-binding positions include Arg-394, 420–422 (KVD), and 502–504 (GVG).

Belongs to the adenylosuccinate synthetase family. In terms of assembly, homodimer. The cofactor is Mg(2+).

It is found in the cytoplasm. It catalyses the reaction IMP + L-aspartate + GTP = N(6)-(1,2-dicarboxyethyl)-AMP + GDP + phosphate + 2 H(+). It functions in the pathway purine metabolism; AMP biosynthesis via de novo pathway; AMP from IMP: step 1/2. Plays an important role in the de novo pathway and in the salvage pathway of purine nucleotide biosynthesis. Catalyzes the first committed step in the biosynthesis of AMP from IMP. The protein is Adenylosuccinate synthetase of Phaeodactylum tricornutum (strain CCAP 1055/1).